We begin with the raw amino-acid sequence, 762 residues long: Primary amine oxidase, liver isozyme (762 aa).

Residues 1–16 form the signal peptide; sequence MFIFIFLSLWTLLVMG. The disordered stretch occupies residues 23–54; it reads GSEEGVGKQCHPSLPPRCPSRSPSDQPWTHPD. An N-linked (GlcNAc...) asparagine glycan is attached at N136. A disulfide bridge connects residues C197 and C198. An N-linked (GlcNAc...) asparagine glycan is attached at N231. 383-393 contacts substrate; that stretch reads YMDSGFGMGYF. The active-site Proton acceptor is the D385. A disulfide bridge links C403 with C429. 467–472 serves as a coordination point for substrate; sequence MLNYDY. The active-site Schiff-base intermediate with substrate; via topaquinone is the Y470. Y470 is modified (2',4',5'-topaquinone). Cu cation contacts are provided by H519 and H521. 6 residues coordinate Ca(2+): D528, L529, D530, E571, F662, and N664. Residue N665 is glycosylated (N-linked (GlcNAc...) asparagine). Ca(2+)-binding residues include E666, D672, and L673. H683 provides a ligand contact to Cu cation. A disulfide bridge links C733 with C740.

The protein belongs to the copper/topaquinone oxidase family. In terms of assembly, homodimer; disulfide-linked. The cofactor is Cu cation. It depends on Ca(2+) as a cofactor. Requires L-topaquinone as cofactor. In terms of processing, topaquinone (TPQ) is generated by copper-dependent autoxidation of a specific tyrosyl residue. In terms of tissue distribution, liver.

The protein localises to the secreted. Its subcellular location is the extracellular space. It catalyses the reaction a primary methyl amine + O2 + H2O = an aldehyde + H2O2 + NH4(+). This chain is Primary amine oxidase, liver isozyme, found in Bos taurus (Bovine).